The primary structure comprises 264 residues: Methylthioribulose-1-phosphate dehydratase (264 aa).

Cys-110 is a binding site for substrate. His-128 and His-130 together coordinate Zn(2+). The Proton donor/acceptor role is filled by Glu-151. His-213 serves as a coordination point for Zn(2+).

The protein belongs to the aldolase class II family. MtnB subfamily. The cofactor is Zn(2+).

It localises to the cytoplasm. The enzyme catalyses 5-(methylsulfanyl)-D-ribulose 1-phosphate = 5-methylsulfanyl-2,3-dioxopentyl phosphate + H2O. The protein operates within amino-acid biosynthesis; L-methionine biosynthesis via salvage pathway; L-methionine from S-methyl-5-thio-alpha-D-ribose 1-phosphate: step 2/6. Catalyzes the dehydration of methylthioribulose-1-phosphate (MTRu-1-P) into 2,3-diketo-5-methylthiopentyl-1-phosphate (DK-MTP-1-P). This Vanderwaltozyma polyspora (strain ATCC 22028 / DSM 70294 / BCRC 21397 / CBS 2163 / NBRC 10782 / NRRL Y-8283 / UCD 57-17) (Kluyveromyces polysporus) protein is Methylthioribulose-1-phosphate dehydratase.